The following is a 133-amino-acid chain: ATP synthase epsilon chain, chloroplastic (133 aa).

The protein belongs to the ATPase epsilon chain family. In terms of assembly, F-type ATPases have 2 components, CF(1) - the catalytic core - and CF(0) - the membrane proton channel. CF(1) has five subunits: alpha(3), beta(3), gamma(1), delta(1), epsilon(1). CF(0) has three main subunits: a, b and c.

The protein localises to the plastid. The protein resides in the chloroplast thylakoid membrane. Produces ATP from ADP in the presence of a proton gradient across the membrane. The protein is ATP synthase epsilon chain, chloroplastic of Atropa belladonna (Belladonna).